Reading from the N-terminus, the 178-residue chain is MPKPEKIQKVEELYQKMLNANALIFTEFKGLSVADLTQLRGKIRPLNAEYRVVKNTLALRAIQRMYPDKDLEKFFVGPTAITYCYDDPFGVLKALVDYAKDHELLKFKGGIIDGEVYSADEIRELAKLPPKEVILSQVVGSISAPLSSLVWNLKWPVNKLVWTLDAIAKEKEKISINQ.

This sequence belongs to the universal ribosomal protein uL10 family. Part of the ribosomal stalk of the 50S ribosomal subunit. The N-terminus interacts with L11 and the large rRNA to form the base of the stalk. The C-terminus forms an elongated spine to which L12 dimers bind in a sequential fashion forming a multimeric L10(L12)X complex.

Forms part of the ribosomal stalk, playing a central role in the interaction of the ribosome with GTP-bound translation factors. The protein is Large ribosomal subunit protein uL10 of Dictyoglomus turgidum (strain DSM 6724 / Z-1310).